The sequence spans 380 residues: Sialidase-2 (380 aa).

The FRIP motif motif lies at tyrosine 20–proline 23. Arginine 21 and arginine 41 together coordinate substrate. Aspartate 46 functions as the Proton acceptor in the catalytic mechanism. The BNR 1 repeat unit spans residues valine 127–serine 138. Substrate contacts are provided by tyrosine 179 and tyrosine 181. One copy of the BNR 2 repeat lies at phenylalanine 197–arginine 208. Substrate-binding residues include glutamate 218, arginine 237, and arginine 304. Residue tyrosine 334 is the Nucleophile of the active site. Residue glutamate 355 is part of the active site.

This sequence belongs to the glycosyl hydrolase 33 family. In terms of tissue distribution, expressed in skeletal muscle, fetal liver and embryonic carcinoma cell line NT2-D1.

The protein resides in the cytoplasm. The protein localises to the cytosol. The catalysed reaction is Hydrolysis of alpha-(2-&gt;3)-, alpha-(2-&gt;6)-, alpha-(2-&gt;8)- glycosidic linkages of terminal sialic acid residues in oligosaccharides, glycoproteins, glycolipids, colominic acid and synthetic substrates.. The enzyme catalyses a ganglioside GD1a + H2O = a ganglioside GM1 + N-acetylneuraminate. It catalyses the reaction a ganglioside GM1 + H2O = a ganglioside GA1 + N-acetylneuraminate. It carries out the reaction a ganglioside GT1b + H2O = a ganglioside GD1b + N-acetylneuraminate. The catalysed reaction is a ganglioside GD1b + H2O = a ganglioside GM1 + N-acetylneuraminate. The enzyme catalyses a ganglioside GD3 + H2O = a ganglioside GM3 + N-acetylneuraminate. It catalyses the reaction a ganglioside GM3 + H2O = a beta-D-galactosyl-(1-&gt;4)-beta-D-glucosyl-(1&lt;-&gt;1)-ceramide + N-acetylneuraminate. It carries out the reaction a ganglioside GM2 + H2O = a ganglioside GA2 + N-acetylneuraminate. The catalysed reaction is a neolactoside IV(3)-alpha-NeuAc-nLc4Cer(d18:1(4E)) + H2O = a neolactoside nLc4Cer(d18:1(4E)) + N-acetylneuraminate. The enzyme catalyses N-acetyl-alpha-neuraminosyl-(2-&gt;3)-beta-D-galactosyl-(1-&gt;4)-D-glucose + H2O = lactose + N-acetylneuraminate. Exo-alpha-sialidase that catalyzes the hydrolytic cleavage of the terminal sialic acid (N-acetylneuraminic acid, Neu5Ac) of a glycan moiety in the catabolism of glycolipids, glycoproteins and oligosacharides. Recognizes sialyl linkage positions of the glycan moiety as well as the supramolecular organization of the sialoglycoconjugate. Displays preference for alpha-(2-&gt;3)-sialylated GD1a and GT1B gangliosides over alpha-(2-&gt;8)-sialylated GD1b, in both monomeric forms and micelles. Hydrolyzes monomeric GM1 ganglioside, but has no activity toward the miscellar form. Has lower sialidase activity for glycoproteins such as fetuin and TF/transferrin that carry a mixture of alpha-(2-&gt;3) and alpha-(2-&gt;6)-sialyl linkages. Cleaves milk oligosaccharide alpha-(2-&gt;3)-sialyllactose, but is inactive toward alpha-(2-&gt;6)-sialyllactose isomer. Has no activity toward colominic acid, a homomer of alpha-(2-&gt;8)-linked Neu5Ac residues. The sequence is that of Sialidase-2 (NEU2) from Homo sapiens (Human).